Here is a 454-residue protein sequence, read N- to C-terminus: Guanine deaminase (454 aa).

2 residues coordinate Zn(2+): histidine 82 and histidine 84. Residues 84-87, 213-214, 240-243, and aspartate 330 contribute to the substrate site; these read HAPQ, RF, and HISE. Zn(2+)-binding residues include histidine 240 and aspartate 330. Phosphoserine is present on serine 453.

The protein belongs to the metallo-dependent hydrolases superfamily. ATZ/TRZ family. Homodimer. The cofactor is Zn(2+).

The catalysed reaction is guanine + H2O + H(+) = xanthine + NH4(+). The protein operates within purine metabolism; guanine degradation; xanthine from guanine: step 1/1. In terms of biological role, catalyzes the hydrolytic deamination of guanine, producing xanthine and ammonia. In Rattus norvegicus (Rat), this protein is Guanine deaminase (Gda).